A 352-amino-acid polypeptide reads, in one-letter code: 3'(2'),5'-bisphosphate nucleotidase (352 aa).

Residue Asp45 is the Proton acceptor of the active site. Glu68, Asp133, Ile135, and Asp136 together coordinate Mg(2+). The active-site Proton acceptor is the Thr138. Adenosine 3',5'-bisphosphate contacts are provided by Thr138, His240, Ser264, Lys267, Arg281, and Asp294. The AMP site is built by His240, Ser264, Lys267, Arg281, and Asp294. Asp294 lines the Mg(2+) pocket.

It belongs to the inositol monophosphatase superfamily. The cofactor is Mg(2+).

The enzyme catalyses 3'-phosphoadenylyl sulfate + H2O = adenosine 5'-phosphosulfate + phosphate. The catalysed reaction is adenosine 3',5'-bisphosphate + H2O = AMP + phosphate. It carries out the reaction adenosine 2',5'-bisphosphate + H2O = AMP + phosphate. Functionally, phosphatase that converts adenosine 3'-phosphate 5'-phosphosulfate (PAPS) to adenosine 5'-phosphosulfate (APS) and 3'(2')-phosphoadenosine 5'-phosphate (PAP) to AMP. May regulate the flux of sulfur in the sulfur-activation pathway by converting PAPS to APS. Involved in osmoadaptation. The polypeptide is 3'(2'),5'-bisphosphate nucleotidase (Emericella nidulans (strain FGSC A4 / ATCC 38163 / CBS 112.46 / NRRL 194 / M139) (Aspergillus nidulans)).